Reading from the N-terminus, the 255-residue chain is Large ribosomal subunit protein uL2 (255 aa).

The interval 211–235 (PHGGGNHQHVGHATTTKRDDPAGKK) is disordered.

It belongs to the universal ribosomal protein uL2 family.

This is Large ribosomal subunit protein uL2 (rpl8) from Dictyostelium discoideum (Social amoeba).